Reading from the N-terminus, the 364-residue chain is tRNA(Met) cytidine acetate ligase (364 aa).

ATP contacts are provided by residues 7–20 (IAEF…HKYL), glycine 96, asparagine 152, and arginine 175.

It belongs to the TmcAL family.

Its subcellular location is the cytoplasm. It catalyses the reaction cytidine(34) in elongator tRNA(Met) + acetate + ATP = N(4)-acetylcytidine(34) in elongator tRNA(Met) + AMP + diphosphate. Catalyzes the formation of N(4)-acetylcytidine (ac(4)C) at the wobble position of elongator tRNA(Met), using acetate and ATP as substrates. First activates an acetate ion to form acetyladenylate (Ac-AMP) and then transfers the acetyl group to tRNA to form ac(4)C34. This chain is tRNA(Met) cytidine acetate ligase, found in Streptococcus sanguinis (strain SK36).